Reading from the N-terminus, the 238-residue chain is Ribonuclease PH (238 aa).

Residues Arg-86 and 124–126 contribute to the phosphate site; that span reads GTR.

Belongs to the RNase PH family. In terms of assembly, homohexameric ring arranged as a trimer of dimers.

It catalyses the reaction tRNA(n+1) + phosphate = tRNA(n) + a ribonucleoside 5'-diphosphate. In terms of biological role, phosphorolytic 3'-5' exoribonuclease that plays an important role in tRNA 3'-end maturation. Removes nucleotide residues following the 3'-CCA terminus of tRNAs; can also add nucleotides to the ends of RNA molecules by using nucleoside diphosphates as substrates, but this may not be physiologically important. Probably plays a role in initiation of 16S rRNA degradation (leading to ribosome degradation) during starvation. This chain is Ribonuclease PH, found in Klebsiella pneumoniae (strain 342).